The sequence spans 1358 residues: DNA-directed RNA polymerase subunit beta (1358 aa).

It belongs to the RNA polymerase beta chain family. The RNAP catalytic core consists of 2 alpha, 1 beta, 1 beta' and 1 omega subunit. When a sigma factor is associated with the core the holoenzyme is formed, which can initiate transcription.

The catalysed reaction is RNA(n) + a ribonucleoside 5'-triphosphate = RNA(n+1) + diphosphate. Functionally, DNA-dependent RNA polymerase catalyzes the transcription of DNA into RNA using the four ribonucleoside triphosphates as substrates. The sequence is that of DNA-directed RNA polymerase subunit beta from Azotobacter vinelandii (strain DJ / ATCC BAA-1303).